Consider the following 370-residue polypeptide: MPHQQILMLFGLLPVATNISTWWNFGSMLLACSTLQVLTGFFLAVHYTANINMAFSSIIHITRDVPYGWLMQNLHAIGASMFFICIYIHIARGLYYGSYLNKETWLSGTTLLIMLMATAFFGYVLPWGQMSFWAATVITNLLTAIPYLGSTMTTWLWGGFAINDPTLTRFFALHFILPFGIISLSSLHILLLHEEGSSNPLGTNSDIDKIPFHPYQTYKDLLMLAMLTTLLLMIVSFFPDIFNDPDNFSKANPLVTPQHIKPEWYFLFAYGILRSIPNKLGGALALTMSIMILLTVPFTHTSKLRSMMFRPLMQLMFWTFAATFLVISWSSTKPVEPPFTTISQAAALMYFLFFISKPLMGLMENKIMKT.

A run of 4 helical transmembrane segments spans residues phenylalanine 25–valine 45, tryptophan 69–isoleucine 90, tryptophan 105–leucine 125, and phenylalanine 170–leucine 190. Positions 75 and 89 each coordinate heme b. Residues histidine 174 and histidine 188 each contribute to the heme b site. Residue histidine 193 coordinates a ubiquinone. 4 helical membrane passes run tyrosine 218–phenylalanine 238, leucine 280–histidine 300, leucine 312–threonine 332, and phenylalanine 339–proline 358.

This sequence belongs to the cytochrome b family. The cytochrome bc1 complex contains 3 respiratory subunits (MT-CYB, CYC1 and UQCRFS1), 2 core proteins (UQCRC1 and UQCRC2) and probably 6 low-molecular weight proteins. Requires heme b as cofactor.

It localises to the mitochondrion inner membrane. Functionally, component of the ubiquinol-cytochrome c reductase complex (complex III or cytochrome b-c1 complex) that is part of the mitochondrial respiratory chain. The b-c1 complex mediates electron transfer from ubiquinol to cytochrome c. Contributes to the generation of a proton gradient across the mitochondrial membrane that is then used for ATP synthesis. In Chilabothrus subflavus (Jamaican yellow boa), this protein is Cytochrome b (MT-CYB).